We begin with the raw amino-acid sequence, 126 residues long: Putative phosphotransferase enzyme IIB component UU178 (126 aa).

A helical transmembrane segment spans residues 11 to 31 (LIIFLGIITFGIFIIYFFTKA). The PTS EIIB type-1 domain occupies 49–126 (PFSLNDFYNC…KELIKKDLFS (78 aa)).

It to M.genitalium MG129 and M.pneumoniae MPN268.

The protein localises to the membrane. The phosphoenolpyruvate-dependent sugar phosphotransferase system (PTS), a major carbohydrate active -transport system, catalyzes the phosphorylation of incoming sugar substrates concomitant with their translocation across the cell membrane. The sequence is that of Putative phosphotransferase enzyme IIB component UU178 from Ureaplasma parvum serovar 3 (strain ATCC 700970).